The primary structure comprises 196 residues: Carnitine operon protein CaiE (196 aa).

A disordered region spans residues 173–196; the sequence is TQPLRQMEENRPRLQGTTDVTPKR. The segment covering 187 to 196 has biased composition (polar residues); the sequence is QGTTDVTPKR.

It belongs to the transferase hexapeptide repeat family.

The protein operates within amine and polyamine metabolism; carnitine metabolism. Its function is as follows. Overproduction of CaiE stimulates the activity of CaiB and CaiD. The polypeptide is Carnitine operon protein CaiE (Escherichia coli O139:H28 (strain E24377A / ETEC)).